Here is a 248-residue protein sequence, read N- to C-terminus: Ribonuclease PH (248 aa).

Phosphate-binding positions include R86 and 124–126; that span reads GTR.

Belongs to the RNase PH family. In terms of assembly, homohexameric ring arranged as a trimer of dimers.

It catalyses the reaction tRNA(n+1) + phosphate = tRNA(n) + a ribonucleoside 5'-diphosphate. Phosphorolytic 3'-5' exoribonuclease that plays an important role in tRNA 3'-end maturation. Removes nucleotide residues following the 3'-CCA terminus of tRNAs; can also add nucleotides to the ends of RNA molecules by using nucleoside diphosphates as substrates, but this may not be physiologically important. Probably plays a role in initiation of 16S rRNA degradation (leading to ribosome degradation) during starvation. This Clostridium perfringens (strain 13 / Type A) protein is Ribonuclease PH.